Reading from the N-terminus, the 135-residue chain is Large ribosomal subunit protein mL41 (135 aa).

The N-terminal 13 residues, Met-1–Arg-13, are a transit peptide targeting the mitochondrion.

Belongs to the mitochondrion-specific ribosomal protein mL41 family. Component of the mitochondrial ribosome large subunit (39S) which comprises a 16S rRNA and about 50 distinct proteins. Interacts with BCL2.

Its subcellular location is the mitochondrion. Component of the mitochondrial ribosome large subunit. Also involved in apoptosis and cell cycle. Enhances p53/TP53 stability, thereby contributing to p53/TP53-induced apoptosis in response to growth-inhibitory condition. Enhances p53/TP53 translocation to the mitochondria. Has the ability to arrest the cell cycle at the G1 phase, possibly by stabilizing the CDKN1A and CDKN1B (p27Kip1) proteins. The chain is Large ribosomal subunit protein mL41 (Mrpl41) from Mus musculus (Mouse).